We begin with the raw amino-acid sequence, 210 residues long: Protein-L-isoaspartate O-methyltransferase (210 aa).

Ser-59 is an active-site residue.

Belongs to the methyltransferase superfamily. L-isoaspartyl/D-aspartyl protein methyltransferase family.

It localises to the cytoplasm. It carries out the reaction [protein]-L-isoaspartate + S-adenosyl-L-methionine = [protein]-L-isoaspartate alpha-methyl ester + S-adenosyl-L-homocysteine. In terms of biological role, catalyzes the methyl esterification of L-isoaspartyl residues in peptides and proteins that result from spontaneous decomposition of normal L-aspartyl and L-asparaginyl residues. It plays a role in the repair and/or degradation of damaged proteins. The sequence is that of Protein-L-isoaspartate O-methyltransferase from Nitratidesulfovibrio vulgaris (strain ATCC 29579 / DSM 644 / CCUG 34227 / NCIMB 8303 / VKM B-1760 / Hildenborough) (Desulfovibrio vulgaris).